The chain runs to 1688 residues: Voltage-dependent L-type calcium channel subunit alpha-1S (1688 aa).

Residues 1 to 24 (MDAMGSAAEEGTQKKKRRPLVPPP) are disordered. Topologically, residues 1 to 51 (MDAMGSAAEEGTQKKKRRPLVPPPPRPPRALFCLGLQNPFRKFCINIVEWK) are cytoplasmic. The stretch at 38-335 (NPFRKFCINI…LVLGVLSGEF (298 aa)) is one I repeat. A helical transmembrane segment spans residues 52 to 70 (PFEMIILLTIFANCVALAI). Topologically, residues 71–88 (FLPMPEDDTNSTNSVLEK) are extracellular. N-linked (GlcNAc...) asparagine glycosylation is present at Asn-80. A helical transmembrane segment spans residues 89-108 (VEYIFLFIFTIESFLKIVAY). The Cytoplasmic segment spans residues 109–120 (GFILHTDAYLRN). The helical transmembrane segment at 121–139 (GWNILDFTIVSVGVFSVLL) threads the bilayer. Residues 140-158 (EQISKLQGLPAPGKSSGFN) lie on the Extracellular side of the membrane. Residues 159-177 (VKALRAFRVLRPLRLVSGV) form a helical membrane-spanning segment. Over 178 to 196 (PSLQVVLNSIIKAMIPLLH) the chain is Cytoplasmic. Residues 197–216 (IALLVLFMIIIYAIVGLELF) form a helical membrane-spanning segment. Residues 217–307 (SGKMHKTCYF…WVNDAIGNEW (91 aa)) are Extracellular-facing. Asn-255 is a glycosylation site (N-linked (GlcNAc...) asparagine). A Ca(2+)-binding site is contributed by Glu-290. Residues 308-332 (PWIYFVSLILLGSFFVLNLVLGVLS) form a helical membrane-spanning segment. Over 333 to 431 (GEFTKEREKA…RKSRDLVKSR (99 aa)) the chain is Cytoplasmic. A binding to the beta subunit region spans residues 355 to 372 (QAMDEDLRGYLDWITHAE). The stretch at 417 to 663 (HRLLRRKSRD…VFLAIAVDNL (247 aa)) is one II repeat. Residues 432–450 (FFYWLVIIIILLNTVIIAT) form a helical membrane-spanning segment. The Extracellular portion of the chain corresponds to 451 to 465 (EHHHQPDSLTKAQDI). A helical membrane pass occupies residues 466–485 (ANEVLLALFTMEMIVKIYAL). The Cytoplasmic portion of the chain corresponds to 486 to 493 (GFQSYFMS). The helical transmembrane segment at 494 to 512 (LFNRFDSFVVCTGLLEVML) threads the bilayer. The Extracellular portion of the chain corresponds to 513–522 (VASDIMSPLG). The helical transmembrane segment at 523–541 (ISVLRCIRLLRIFKITRYW) threads the bilayer. The Cytoplasmic portion of the chain corresponds to 542 to 560 (TSLNNLVASLLNSVRSIAS). Residues 561-580 (LLLLLFLFMIIFALLGMQMF) traverse the membrane as a helical segment. At 581–635 (GGKFDFEDLEVRRSTFDTFPQALITVFQILTGEDWTAVMYNGIMAYGGPTYSGMS) the chain is on the extracellular side. A Ca(2+)-binding site is contributed by Glu-613. The chain crosses the membrane as a helical span at residues 636 to 660 (VCIYFIILFVCGNYILLNVFLAIAV). At 661–797 (DNLAEAENLT…VLCHRIINAT (137 aa)) the chain is on the cytoplasmic side. 2 disordered regions span residues 672 to 696 (AQKA…TEEE) and 729 to 755 (EIKD…ISPR). Positions 740 to 749 (PGDDEEEEPE) are enriched in acidic residues. Residues 784–1066 (NKIRVLCHRI…IFVGFVIVTF (283 aa)) form an III repeat. A helical transmembrane segment spans residues 798 to 816 (TFTNFILLFILLSSISLAA). At 817–832 (EDPIQPESFRNKVLSK) the chain is on the extracellular side. The chain crosses the membrane as a helical span at residues 833–852 (LDIVFTVIFTTEIVLKMTAY). Residues 853 to 864 (GAFLHKGSFCRN) are Cytoplasmic-facing. The helical transmembrane segment at 865-883 (SFNILDLSVVGVSLISMGI) threads the bilayer. The Extracellular segment spans residues 884-890 (ESSAISV). Residues 891–909 (VKILRVLRVLRPLRAINRA) form a helical membrane-spanning segment. Over 910-928 (KGLKHVVQCLFVAIKTIGN) the chain is Cytoplasmic. A helical transmembrane segment spans residues 929 to 948 (IVLVTTLLQFMFSCIGVQLF). The Extracellular portion of the chain corresponds to 949-1038 (KGKFYSCTDT…MGPIYNYRIE (90 aa)). The segment at 986-1075 (RVWSHSDFHF…FQEQGEQEYK (90 aa)) is dihydropyridine binding. A Ca(2+)-binding site is contributed by Glu-1012. The helical transmembrane segment at 1039 to 1063 (IAVFFIVYIILIAFFMMNIFVGFVI) threads the bilayer. Residues 1064-1116 (VTFQEQGEQEYKDCELDKNQRQCVQYALKARPLRRYIPKNPHQYKIWYVVTSS) are Cytoplasmic-facing. The stretch at 1103–1371 (NPHQYKIWYV…LFVAVIMDNF (269 aa)) is one IV repeat. The helical transmembrane segment at 1117–1135 (YFEYLMFFLITLNTISLGM) threads the bilayer. Topologically, residues 1136 to 1150 (QHYGQTAEFSYMSDI) are extracellular. Residues 1151 to 1170 (LNVAFTGIFTVEMFLKLAAF) form a helical membrane-spanning segment. Over 1171–1178 (KAKGYFGD) the chain is Cytoplasmic. Residues 1179–1197 (PWNVFDFLIVIGSVIDVIL) form a helical membrane-spanning segment. Residues 1198-1218 (SEIDTPGIPATPGAEESSRIS) lie on the Extracellular side of the membrane. Residues 1219 to 1237 (ITFFRLFRVLRLVKLLSRG) traverse the membrane as a helical segment. Residues 1238–1256 (EGVRTLLWTFIKSFQALPY) lie on the Cytoplasmic side of the membrane. A helical transmembrane segment spans residues 1257 to 1276 (VALLIVMLFFIYAVIGMQVF). The Extracellular portion of the chain corresponds to 1277-1343 (GKIALVDGTH…GEEYTCGTSF (67 aa)). The dihydropyridine binding stretch occupies residues 1324–1390 (LCDPMSDFQP…LGPHHLDEFK (67 aa)). Positions 1336-1379 (EYTCGTSFAYFYFISFYMLCAFLIINLFVAVIMDNFDYLTRDWS) are phenylalkylamine binding. The helical transmembrane segment at 1344-1368 (AYFYFISFYMLCAFLIINLFVAVIM) threads the bilayer. The Cytoplasmic segment spans residues 1369–1688 (DNFDYLTRDW…TNSSISQATN (320 aa)). 2 disordered regions span residues 1635-1664 (PEPV…RLTT) and 1669-1688 (RVQQ…QATN). Residues 1678-1688 (DTNSSISQATN) are compositionally biased toward polar residues.

Belongs to the calcium channel alpha-1 subunit (TC 1.A.1.11) family. In terms of assembly, multisubunit complex consisting of alpha-1, alpha-2, beta and delta subunits in a 1:1:1:1 ratio. The channel activity is directed by the pore-forming and voltage-sensitive alpha-1 subunit. In many cases, this subunit is sufficient to generate voltage-sensitive calcium channel activity. The auxiliary subunits beta and alpha-2/delta linked by a disulfide bridge regulate the channel activity. An additional gamma subunit is present only in skeletal muscle L-type channel. In terms of processing, phosphorylation by PKA stimulates the calcium channel function. Skeletal muscle specific.

Its subcellular location is the membrane. In terms of biological role, voltage-sensitive calcium channels (VSCC) mediate the entry of calcium ions into excitable cells and are also involved in a variety of calcium-dependent processes, including muscle contraction, gene expression, cell motility, cell division and cell death. The isoform alpha-1S gives rise to L-type calcium currents. Long-lasting (L-type) calcium channels belong to the 'high-voltage activated' (HVA) group. They are blocked by dihydropyridines (DHP), phenylalkylamines, and by benzothiazepines. Calcium channels containing the alpha-1S subunit play an important role in excitation-contraction coupling in skele|tal muscle. This is Voltage-dependent L-type calcium channel subunit alpha-1S from Aquarana catesbeiana (American bullfrog).